Consider the following 334-residue polypeptide: Phosphate acyltransferase (334 aa).

It belongs to the PlsX family. In terms of assembly, homodimer. Probably interacts with PlsY.

It is found in the cytoplasm. The enzyme catalyses a fatty acyl-[ACP] + phosphate = an acyl phosphate + holo-[ACP]. Its pathway is lipid metabolism; phospholipid metabolism. In terms of biological role, catalyzes the reversible formation of acyl-phosphate (acyl-PO(4)) from acyl-[acyl-carrier-protein] (acyl-ACP). This enzyme utilizes acyl-ACP as fatty acyl donor, but not acyl-CoA. This chain is Phosphate acyltransferase, found in Streptococcus thermophilus (strain ATCC BAA-491 / LMD-9).